A 106-amino-acid chain; its full sequence is Immunoglobulin lambda constant 7 (106 aa).

Positions 7-101 (PSVTLFPPSS…EGSTVEKTVA (95 aa)) constitute an Ig-like domain. A disulfide bridge connects residues C28 and C87.

In terms of assembly, immunoglobulins are composed of two identical heavy chains and two identical light chains; disulfide-linked.

It localises to the secreted. Its subcellular location is the cell membrane. Constant region of immunoglobulin light chains. Immunoglobulins, also known as antibodies, are membrane-bound or secreted glycoproteins produced by B lymphocytes. In the recognition phase of humoral immunity, the membrane-bound immunoglobulins serve as receptors which, upon binding of a specific antigen, trigger the clonal expansion and differentiation of B lymphocytes into immunoglobulins-secreting plasma cells. Secreted immunoglobulins mediate the effector phase of humoral immunity, which results in the elimination of bound antigens. The antigen binding site is formed by the variable domain of one heavy chain, together with that of its associated light chain. Thus, each immunoglobulin has two antigen binding sites with remarkable affinity for a particular antigen. The variable domains are assembled by a process called V-(D)-J rearrangement and can then be subjected to somatic hypermutations which, after exposure to antigen and selection, allow affinity maturation for a particular antigen. This Homo sapiens (Human) protein is Immunoglobulin lambda constant 7.